Reading from the N-terminus, the 217-residue chain is uncharacterized protein (217 aa).

The next 7 membrane-spanning stretches (helical) occupy residues 4-23 (IYGI…GKET), 44-66 (NVVI…LTWV), 76-98 (TVET…SIII), 111-128 (FLYL…IHAI), 132-154 (MAMV…PLAL), 166-188 (AGTA…IVLF), and 198-215 (LLLS…ALQL).

Its subcellular location is the cell membrane. This is an uncharacterized protein from Archaeoglobus fulgidus (strain ATCC 49558 / DSM 4304 / JCM 9628 / NBRC 100126 / VC-16).